Reading from the N-terminus, the 226-residue chain is Urease accessory protein UreF (226 aa).

Belongs to the UreF family. UreD, UreF and UreG form a complex that acts as a GTP-hydrolysis-dependent molecular chaperone, activating the urease apoprotein by helping to assemble the nickel containing metallocenter of UreC. The UreE protein probably delivers the nickel.

The protein localises to the cytoplasm. Its function is as follows. Required for maturation of urease via the functional incorporation of the urease nickel metallocenter. This Burkholderia lata (strain ATCC 17760 / DSM 23089 / LMG 22485 / NCIMB 9086 / R18194 / 383) protein is Urease accessory protein UreF.